Reading from the N-terminus, the 400-residue chain is Deoxyguanosinetriphosphate triphosphohydrolase-like protein (400 aa).

Residues 73–215 (RLTHSIEVSQ…AAIADDIAYN (143 aa)) enclose the HD domain.

This sequence belongs to the dGTPase family. Type 2 subfamily.

The protein is Deoxyguanosinetriphosphate triphosphohydrolase-like protein of Bartonella henselae (strain ATCC 49882 / DSM 28221 / CCUG 30454 / Houston 1) (Rochalimaea henselae).